Reading from the N-terminus, the 446-residue chain is tRNA-2-methylthio-N(6)-dimethylallyladenosine synthase (446 aa).

The MTTase N-terminal domain maps to arginine 6–aspartate 122. 6 residues coordinate [4Fe-4S] cluster: cysteine 15, cysteine 51, cysteine 85, cysteine 157, cysteine 161, and cysteine 164. The Radical SAM core domain maps to arginine 143–glutamate 380. One can recognise a TRAM domain in the interval glutamine 383 to phenylalanine 446.

This sequence belongs to the methylthiotransferase family. MiaB subfamily. In terms of assembly, monomer. [4Fe-4S] cluster is required as a cofactor.

The protein localises to the cytoplasm. It catalyses the reaction N(6)-dimethylallyladenosine(37) in tRNA + (sulfur carrier)-SH + AH2 + 2 S-adenosyl-L-methionine = 2-methylsulfanyl-N(6)-dimethylallyladenosine(37) in tRNA + (sulfur carrier)-H + 5'-deoxyadenosine + L-methionine + A + S-adenosyl-L-homocysteine + 2 H(+). Functionally, catalyzes the methylthiolation of N6-(dimethylallyl)adenosine (i(6)A), leading to the formation of 2-methylthio-N6-(dimethylallyl)adenosine (ms(2)i(6)A) at position 37 in tRNAs that read codons beginning with uridine. The polypeptide is tRNA-2-methylthio-N(6)-dimethylallyladenosine synthase (Microcystis aeruginosa (strain NIES-843 / IAM M-2473)).